The chain runs to 212 residues: ER lumen protein-retaining receptor 1 (212 aa).

At 1-4 (MNLF) the chain is on the lumenal side. The helical transmembrane segment at 5–24 (RFLGDLSHLLAIILLLLKIW) threads the bilayer. Residues 25–32 (KSRSCAGI) lie on the Cytoplasmic side of the membrane. A helical transmembrane segment spans residues 33 to 52 (SGKSQVLFAVVFTARYLDLF). Positions 47–48 (RY) are interaction with the K-D-E-L motif on target proteins. The Lumenal segment spans residues 53 to 58 (TNYISL). A helical transmembrane segment spans residues 59–79 (YNTCMKVVYIACSFTTVWLIY). The Cytoplasmic portion of the chain corresponds to 80–92 (SKFKATYDGNHDT). A helical membrane pass occupies residues 93–110 (FRVEFLVVPTAILAFLVN). At 111 to 116 (HDFTPL) the chain is on the lumenal side. A helical membrane pass occupies residues 117-135 (EILWTFSIYLESVAILPQL). At 136-149 (FMVSKTGEAETITS) the chain is on the cytoplasmic side. Residues 150–168 (HYLFALGVYRTLYLFNWIW) traverse the membrane as a helical segment. The segment at 159–169 (RTLYLFNWIWR) is interaction with the K-D-E-L motif on target proteins. Residues 169–178 (RYHFEGFFDL) are Lumenal-facing. The helical transmembrane segment at 179 to 199 (IAIVAGLVQTVLYCDFFYLYI) threads the bilayer. Residues 200–212 (TKVLKGKKLSLPA) lie on the Cytoplasmic side of the membrane. The tract at residues 204-207 (KGKK) is important for recycling of cargo proteins with the sequence motif K-D-E-L from the Golgi to the endoplasmic reticulum. Position 209 is a phosphoserine; by PKA (S209).

Belongs to the ERD2 family. As to quaternary structure, upon ligand binding the receptor oligomerizes and interacts with components of the transport machinery such as ARFGAP1 and ARF1. Phosphorylation by PKA at Ser-209 is required for endoplasmic reticulum retention function.

The protein resides in the golgi apparatus membrane. It localises to the cytoplasmic vesicle. It is found in the COPI-coated vesicle membrane. The protein localises to the endoplasmic reticulum membrane. Its subcellular location is the endoplasmic reticulum-Golgi intermediate compartment membrane. Its function is as follows. Receptor for the C-terminal sequence motif K-D-E-L that is present on endoplasmic reticulum resident proteins and that mediates their recycling from the Golgi back to the endoplasmic reticulum. The sequence is that of ER lumen protein-retaining receptor 1 (KDELR1) from Homo sapiens (Human).